Here is an 86-residue protein sequence, read N- to C-terminus: UPF0213 protein OB0043 (86 aa).

The region spanning 3–80 (EQHYVYILRC…LPRFEKLKLI (78 aa)) is the GIY-YIG domain.

It belongs to the UPF0213 family.

The chain is UPF0213 protein OB0043 from Oceanobacillus iheyensis (strain DSM 14371 / CIP 107618 / JCM 11309 / KCTC 3954 / HTE831).